An 859-amino-acid chain; its full sequence is Homeobox-leucine zipper protein HOX32 (859 aa).

The segment at 7–31 is disordered; that stretch reads AAVHGVGRQDRSSPGGGGAPQVDTG. The segment at residues 29–92 is a DNA-binding region (homeobox); it reads DTGKYVRYTP…NRRCREKQRK (64 aa). The stretch at 100–129 forms a coiled coil; that stretch reads VNRKLTAMNKLLMEENDRLQKQVSRLVYEN. The segment covering 146–164 has biased composition (polar residues); the sequence is TSCESVVTSGQHHQQQNPA. Residues 146 to 172 are disordered; the sequence is TSCESVVTSGQHHQQQNPAATRPQRDA. The 223-residue stretch at 171–393 folds into the START domain; that stretch reads DANNPAGLLA…LRHIRQIAHE (223 aa).

The protein belongs to the HD-ZIP homeobox family. Class III subfamily. As to expression, expressed in seedlings, roots, stems, leaf sheaths and blades and panicles.

The protein localises to the nucleus. Functionally, probable transcription factor. In Oryza sativa subsp. japonica (Rice), this protein is Homeobox-leucine zipper protein HOX32 (HOX32).